We begin with the raw amino-acid sequence, 475 residues long: Alpha,alpha-trehalose-phosphate synthase [UDP-forming] (475 aa).

Residues Tyr-93 and Asp-147 each contribute to the D-glucose 6-phosphate site. UDP is bound by residues Arg-285 and Lys-290. UDP-alpha-D-glucose is bound by residues Arg-285 and Lys-290. Residue Arg-323 participates in D-glucose 6-phosphate binding. 384–392 (DGMNLVSYE) serves as a coordination point for UDP-alpha-D-glucose. 388–392 (LVSYE) is a binding site for UDP.

The protein belongs to the glycosyltransferase 20 family.

It catalyses the reaction D-glucose 6-phosphate + UDP-alpha-D-glucose = alpha,alpha-trehalose 6-phosphate + UDP + H(+). It participates in carbohydrate biosynthesis. In terms of biological role, synthase catalytic subunit of the trehalose synthase complex that catalyzes the production of trehalose from glucose-6-phosphate and UDP-alpha-D-glucose in a two step process. The sequence is that of Alpha,alpha-trehalose-phosphate synthase [UDP-forming] from Pichia angusta (Yeast).